The sequence spans 146 residues: Ribosome maturation factor RimP (146 aa).

Belongs to the RimP family.

It is found in the cytoplasm. Its function is as follows. Required for maturation of 30S ribosomal subunits. In Helicobacter pylori (strain J99 / ATCC 700824) (Campylobacter pylori J99), this protein is Ribosome maturation factor RimP.